A 321-amino-acid polypeptide reads, in one-letter code: Type 3 secretion system translocon protein SctB (321 aa).

The helical transmembrane segment at 99-119 (AALIGGAISSVLGILGSFAAI) threads the bilayer.

This sequence belongs to the SctB/EspB family. The core secretion machinery of the T3SS is composed of approximately 20 different proteins, including cytoplasmic components, a base, an export apparatus and a needle. This subunit is involved in the formation of a pore, called the translocon, in host membrane.

It is found in the secreted. Its subcellular location is the cell surface. The protein localises to the host membrane. Component of the type III secretion system (T3SS), also called injectisome, which is used to inject bacterial effector proteins into eukaryotic host cells. EspD and EspB are inserted into the host membrane where they form a pore and allow the translocation of effector proteins into the cytosol of target cells. Necessary for intimate attachment to epithelial cells. The polypeptide is Type 3 secretion system translocon protein SctB (Escherichia coli O127:H6 (strain E2348/69 / EPEC)).